A 134-amino-acid chain; its full sequence is Small ribosomal subunit protein uS8c (134 aa).

Belongs to the universal ribosomal protein uS8 family. As to quaternary structure, part of the 30S ribosomal subunit.

It is found in the plastid. The protein localises to the chloroplast. In terms of biological role, one of the primary rRNA binding proteins, it binds directly to 16S rRNA central domain where it helps coordinate assembly of the platform of the 30S subunit. This Nicotiana tomentosiformis (Tobacco) protein is Small ribosomal subunit protein uS8c (rps8).